A 92-amino-acid polypeptide reads, in one-letter code: C-C motif chemokine 3 (92 aa).

A signal peptide spans 1–19 (MKVPGAALAVLLCTMSLCS). Cystine bridges form between cysteine 33–cysteine 57 and cysteine 34–cysteine 73.

This sequence belongs to the intercrine beta (chemokine CC) family. As to quaternary structure, self-associates. Also heterodimer of MIP-1-alpha(4-69) and MIP-1-beta(3-69). Interacts with CCR1.

It is found in the secreted. In terms of biological role, monokine with inflammatory and chemokinetic properties. Binds to CCR1, CCR4 and CCR5. One of the major HIV-suppressive factors produced by CD8+ T-cells. Recombinant MIP-1-alpha induces a dose-dependent inhibition of different strains of HIV-1, HIV-2, and simian immunodeficiency virus (SIV). The polypeptide is C-C motif chemokine 3 (CCL3) (Canis lupus familiaris (Dog)).